The sequence spans 262 residues: Transmembrane protein 270 (262 aa).

A run of 5 helical transmembrane segments spans residues 6–26 (LVRSSLSGTLLVVVKLSALLI), 30–50 (AHLYNFLLLKIFLFNHWLLGL), 67–87 (PVGRVLWAGLTLLEVPVCLAL), 92–112 (LVWAGLLGCARALGLGPKWLG), and 127–147 (LFLSCLHSLMLAALLLLLLVW). A disordered region spans residues 226–262 (QEAEPQKALGLSSETPPPGPPAPGARPVLPEPGTPGE). Pro residues predominate over residues 240-262 (TPPPGPPAPGARPVLPEPGTPGE).

Its subcellular location is the membrane. This is Transmembrane protein 270 from Bos taurus (Bovine).